Reading from the N-terminus, the 411-residue chain is uncharacterized protein (411 aa).

In terms of domain architecture, UmuC spans 20–199; the sequence is FLYFDFDAFF…LPITEIPGIG (180 aa).

Belongs to the DNA polymerase type-Y family.

This is an uncharacterized protein from Mycoplasma genitalium (strain ATCC 33530 / DSM 19775 / NCTC 10195 / G37) (Mycoplasmoides genitalium).